The sequence spans 452 residues: FAD transporter (452 aa).

12 helical membrane-spanning segments follow: residues 21-41 (LPNL…TFFI), 49-69 (LAAI…AIGV), 96-116 (ALLL…IFIE), 131-151 (LIHD…LLMV), 167-187 (MIMT…IFGI), 199-219 (AIAT…LLII), 248-270 (AALM…AHID), 283-303 (LESV…PFIA), 324-344 (FILV…QPLA), 357-377 (LSFY…VIIF), 392-412 (VINL…GSYI), and 417-437 (GLLL…YYLA).

Belongs to the multi antimicrobial extrusion (MATE) (TC 2.A.66.1) family.

The protein localises to the cell inner membrane. Its function is as follows. Flavin adenine dinucleotide (FAD) transporter that facilitates export of flavin electron shuttles. The polypeptide is FAD transporter (Shewanella oneidensis (strain ATCC 700550 / JCM 31522 / CIP 106686 / LMG 19005 / NCIMB 14063 / MR-1)).